The primary structure comprises 392 residues: p21-activated protein kinase-interacting protein 1 (392 aa).

6 WD repeats span residues 33-72, 73-113, 114-155, 156-195, 196-235, and 236-275; these read VADFTHHAHTASLSAVAVNSRFVVTGSKDETIHIYDMKKK, IEHG…AKKW, ECLK…LVEG, RSAFIKNIKQNAHIVEWSPRGEQYVVIIQNKIDIYQLDTA, SISGTITNEKRISSVKFLSESVLAVAGDEEVIRFFDCDSL, and VCLCEFKAHENRVKDMFSFEIPEHHVIVSASSDGFIKMWK. A disordered region spans residues 312–392; sequence SLPPAAEPSP…RKKKKIKTMQ (81 aa). Ser-320 bears the Phosphoserine mark. Positions 325–345 are enriched in basic and acidic residues; it reads EQSKIGKKEPGDTVHKEEKRS. Over residues 381-392 the composition is skewed to basic residues; that stretch reads KKRKKKKIKTMQ.

In terms of assembly, interacts with PAK1. Expressed in brain, colon, heart, kidney, liver, lung, muscle, peripheral blood leukocytes, placenta, small intestine, spleen and thymus.

It localises to the nucleus. Its subcellular location is the nucleolus. In terms of biological role, negatively regulates the PAK1 kinase. PAK1 is a member of the PAK kinase family, which has been shown to play a positive role in the regulation of signaling pathways involving MAPK8 and RELA. PAK1 exists as an inactive homodimer, which is activated by binding of small GTPases such as CDC42 to an N-terminal regulatory domain. PAK1IP1 also binds to the N-terminus of PAK1, and inhibits the specific activation of PAK1 by CDC42. May be involved in ribosomal large subunit assembly. This Homo sapiens (Human) protein is p21-activated protein kinase-interacting protein 1 (PAK1IP1).